The sequence spans 115 residues: Non-specific lipid-transfer protein (115 aa).

Positions 1 to 24 (MASSAVTKLALVVALCMAVSVAHA) are cleaved as a signal peptide. Cystine bridges form between Cys-27–Cys-74, Cys-37–Cys-51, Cys-52–Cys-97, and Cys-72–Cys-111.

Belongs to the plant LTP family.

Functionally, plant non-specific lipid-transfer proteins transfer phospholipids as well as galactolipids across membranes. May play a role in wax or cutin deposition in the cell walls of expanding epidermal cells and certain secretory tissues. This is Non-specific lipid-transfer protein (MALD3) from Malus domestica (Apple).